Consider the following 231-residue polypeptide: MMASLATSISGSFRILVKSSSTRNGFPVISDQNPSFVLFANKRRHISRTAIFHRSAISGSSQGEKISPLASGVSSGLYSAQTFDLTPQNVDLVLEDVRPFLISDGGNVDVVSVEDGVVSLKLQGACTSCPSSSTTMTMGIERVLKEKFGDALKDIRQVFDEEVKQITVEAVNAHLDILRPAIKNYGGSVEVLSVEGEDCVVKYVGPESIGMGIQAAIKEKFKDISNVTFTS.

The N-terminal 69 residues, 1-69 (MMASLATSIS…SSQGEKISPL (69 aa)), are a transit peptide targeting the chloroplast.

This sequence belongs to the NifU family. In terms of assembly, homodimer; disulfide-linked. In terms of tissue distribution, predominantly expressed in floral stalks and siliques. Expressed in leaves, cauline leaves, flower stalks and flowers (at protein level).

The protein localises to the plastid. Its subcellular location is the chloroplast stroma. Its function is as follows. Molecular scaffold for [Fe-S] cluster assembly of chloroplastic iron-sulfur proteins. The sequence is that of NifU-like protein 1, chloroplastic (NIFU1) from Arabidopsis thaliana (Mouse-ear cress).